The following is a 269-amino-acid chain: 4-hydroxy-tetrahydrodipicolinate reductase (269 aa).

Residues 8 to 13 and Glu-34 contribute to the NAD(+) site; that span reads GAAGRM. An NADP(+)-binding site is contributed by Arg-35. NAD(+) contacts are provided by residues 98–100 and 122–125; these read GTT and APNY. The active-site Proton donor/acceptor is His-155. His-156 provides a ligand contact to (S)-2,3,4,5-tetrahydrodipicolinate. Lys-159 (proton donor) is an active-site residue. A (S)-2,3,4,5-tetrahydrodipicolinate-binding site is contributed by 165–166; the sequence is GT.

It belongs to the DapB family.

It is found in the cytoplasm. The enzyme catalyses (S)-2,3,4,5-tetrahydrodipicolinate + NAD(+) + H2O = (2S,4S)-4-hydroxy-2,3,4,5-tetrahydrodipicolinate + NADH + H(+). It catalyses the reaction (S)-2,3,4,5-tetrahydrodipicolinate + NADP(+) + H2O = (2S,4S)-4-hydroxy-2,3,4,5-tetrahydrodipicolinate + NADPH + H(+). Its pathway is amino-acid biosynthesis; L-lysine biosynthesis via DAP pathway; (S)-tetrahydrodipicolinate from L-aspartate: step 4/4. In terms of biological role, catalyzes the conversion of 4-hydroxy-tetrahydrodipicolinate (HTPA) to tetrahydrodipicolinate. The protein is 4-hydroxy-tetrahydrodipicolinate reductase of Vibrio vulnificus (strain CMCP6).